The primary structure comprises 494 residues: Probable terminase, large subunit (494 aa).

26–33 (ADVLFGKT) contacts ATP. The Walker A motif motif lies at 56-63 (SGHGTGKS). The Walker B motif signature appears at 158-163 (LYIIDE). The active-site For ATPase activity is the glutamate 163. Mg(2+) is bound by residues aspartate 293, aspartate 356, and aspartate 446.

Belongs to the punalikevirus large terminase family. Interacts with pacA protein. Mg(2+) serves as cofactor.

In terms of biological role, component of the molecular motor that translocates genomic DNA in empty capsid during DNA packaging. Heterooligomerize with small terminase protein to be docked on capsid portal protein. Forms a ring-like structure through which genomic DNA is translocated into the capsid. May have or induce an endonuclease activity to cleave the genome concatemer after encapsidation. The sequence is that of Probable terminase, large subunit (pacB) from Escherichia coli (Bacteriophage P7).